The sequence spans 2003 residues: Neurogenic locus notch homolog protein 4 (2003 aa).

The signal sequence occupies residues 1–23 (MQPPSLLLLLLLLLLLCVSVVRP). EGF-like domains lie at 24 to 63 (RGLL…ETCQ), 64 to 115 (FPDP…ERCQ), 118 to 155 (LEDP…EQCQ), and 156 to 192 (LRDF…HACE). The Extracellular portion of the chain corresponds to 24–1447 (RGLLCGSFPE…TAPPANQLPW (1424 aa)). Intrachain disulfides connect cysteine 28/cysteine 41, cysteine 35/cysteine 51, cysteine 53/cysteine 62, cysteine 68/cysteine 80, cysteine 74/cysteine 103, cysteine 105/cysteine 114, cysteine 122/cysteine 133, cysteine 127/cysteine 143, cysteine 145/cysteine 154, cysteine 160/cysteine 171, cysteine 165/cysteine 180, cysteine 182/cysteine 191, cysteine 198/cysteine 211, cysteine 205/cysteine 220, cysteine 222/cysteine 231, cysteine 238/cysteine 249, cysteine 243/cysteine 262, cysteine 264/cysteine 273, cysteine 280/cysteine 291, cysteine 285/cysteine 300, cysteine 302/cysteine 311, cysteine 318/cysteine 332, cysteine 326/cysteine 341, cysteine 343/cysteine 352, cysteine 359/cysteine 370, cysteine 364/cysteine 379, cysteine 381/cysteine 390, cysteine 396/cysteine 407, cysteine 401/cysteine 418, cysteine 420/cysteine 429, cysteine 436/cysteine 452, cysteine 446/cysteine 461, cysteine 463/cysteine 472, cysteine 479/cysteine 490, cysteine 484/cysteine 499, cysteine 501/cysteine 510, cysteine 517/cysteine 528, cysteine 522/cysteine 537, cysteine 539/cysteine 548, cysteine 555/cysteine 566, cysteine 560/cysteine 575, cysteine 577/cysteine 586, cysteine 593/cysteine 604, cysteine 598/cysteine 613, cysteine 615/cysteine 624, cysteine 629/cysteine 640, cysteine 634/cysteine 649, and cysteine 651/cysteine 658. The EGF-like 5; calcium-binding domain maps to 194–232 (DVNECFQDPGPCPKGTSCHNTLGSFQCLCPVGQEGPRCE). One can recognise an EGF-like 6 domain in the interval 234–274 (RAGPCPPRGCSNGGTCQLMPEKDSTFHLCLCPPGFIGPDCE). In terms of domain architecture, EGF-like 7; calcium-binding spans 276–312 (NPDNCVSHQCQNGGTCQDGLDTYTCLCPETWTGWDCS). The EGF-like 8; calcium-binding domain occupies 314–353 (DVDECETQGPPHCRNGGTCQNSAGSFHCVCVSGWGGTSCE). The EGF-like 9; calcium-binding domain occupies 355–391 (NLDDCIAATCAPGSTCIDRVGSFSCLCPPGRTGLLCH). The 39-residue stretch at 392-430 (LEDMCLSQPCHGDAQCSTNPLTGSTLCLCQPGYSGPTCH) folds into the EGF-like 10 domain. The EGF-like 11; calcium-binding domain maps to 432–473 (DLDECLMAQQGPSPCEHGGSCLNTPGSFNCLCPPGYTGSRCE). Residues 475–511 (DHNECLSQPCHPGSTCLDLLATFHCLCPPGLEGQLCE) form the EGF-like 12; calcium-binding domain. The EGF-like 13; calcium-binding domain occupies 513-549 (ETNECASAPCLNHADCHDLLNGFQCICLPGFSGTRCE). The 37-residue stretch at 551–587 (DIDECRSSPCANGGQCQDQPGAFHCKCLPGFEGPRCQ) folds into the EGF-like 14; calcium-binding domain. In terms of domain architecture, EGF-like 15; calcium-binding spans 589–625 (EVDECLSDPCPVGASCLDLPGAFFCLCPSGFTGQLCE). EGF-like domains lie at 626 to 659 (VPLC…PGCA), 661 to 689 (PEDN…PECE), 691 to 727 (ELGG…PTCS), 729 to 765 (EMTA…PQCQ), 767 to 803 (STDY…PRCE), 806 to 842 (LRPS…GSCQ), 844 to 880 (LMDL…PLCN), 882 to 928 (PLSS…SLCQ), 930 to 966 (HVNP…QNCS), 968 to 1004 (ELDA…LRCE), 1006 to 1044 (DVDE…QWCE), 1046 to 1085 (EIDP…PTCS), 1087 to 1126 (RAPS…PDCL), and 1130 to 1171 (APKG…PRCQ). An N-linked (GlcNAc...) asparagine glycan is attached at asparagine 664. 47 disulfide bridges follow: cysteine 665–cysteine 672, cysteine 667–cysteine 677, cysteine 679–cysteine 688, cysteine 695–cysteine 706, cysteine 700–cysteine 715, cysteine 717–cysteine 726, cysteine 733–cysteine 744, cysteine 738–cysteine 753, cysteine 755–cysteine 764, cysteine 771–cysteine 782, cysteine 776–cysteine 791, cysteine 793–cysteine 802, cysteine 810–cysteine 821, cysteine 815–cysteine 830, cysteine 832–cysteine 841, cysteine 848–cysteine 859, cysteine 853–cysteine 868, cysteine 870–cysteine 879, cysteine 886–cysteine 907, cysteine 901–cysteine 916, cysteine 918–cysteine 927, cysteine 934–cysteine 945, cysteine 939–cysteine 954, cysteine 956–cysteine 965, cysteine 972–cysteine 983, cysteine 977–cysteine 992, cysteine 994–cysteine 1003, cysteine 1010–cysteine 1023, cysteine 1015–cysteine 1032, cysteine 1034–cysteine 1043, cysteine 1050–cysteine 1061, cysteine 1055–cysteine 1073, cysteine 1075–cysteine 1084, cysteine 1091–cysteine 1102, cysteine 1096–cysteine 1114, cysteine 1116–cysteine 1125, cysteine 1134–cysteine 1146, cysteine 1140–cysteine 1159, cysteine 1161–cysteine 1170, cysteine 1178–cysteine 1191, cysteine 1187–cysteine 1203, cysteine 1214–cysteine 1238, cysteine 1220–cysteine 1233, cysteine 1229–cysteine 1245, cysteine 1251–cysteine 1277, cysteine 1259–cysteine 1272, and cysteine 1268–cysteine 1284. Residue asparagine 714 is glycosylated (N-linked (GlcNAc...) asparagine). Asparagine 964 carries an N-linked (GlcNAc...) asparagine glycan. N-linked (GlcNAc...) asparagine glycosylation is present at asparagine 1143. 3 LNR repeats span residues 1170–1213 (CQKP…PWKG), 1214–1250 (CPSH…TPPA), and 1251–1294 (CTPA…PEWG). The interval 1347–1371 (AEEKLGGTRDPTYQERAAPQTQPLG) is disordered. Residues 1448–1468 (PVLCSPVAGVILLALGALLVL) traverse the membrane as a helical segment. Topologically, residues 1469–2003 (QLIRRRRREH…PINQGGEGKK (535 aa)) are cytoplasmic. The tract at residues 1485 to 1508 (PGFTRRPRTQSAPHRRRPPLGEDS) is disordered. Residues 1489–1502 (RRPRTQSAPHRRRP) are compositionally biased toward basic residues. 5 ANK repeats span residues 1633–1665 (TGET…QPDR), 1666–1698 (AGRT…DART), 1700–1732 (DGTT…ARDK), 1733–1765 (WGKT…AQDN), and 1766–1798 (REQT…LRDQ). 2 disordered regions span residues 1900–1927 (LSGV…RPNP) and 1968–2003 (PPPC…EGKK).

This sequence belongs to the NOTCH family. Heterodimer of a C-terminal fragment N(TM) and a N-terminal fragment N(EC) which are probably linked by disulfide bonds. Interacts with MAML1, MAML2 and MAML3 which act as transcriptional coactivators for NOTCH4. As to quaternary structure, (Microbial infection) Interacts with Epstein-Barr virus (EBV) RK-BARF0. In terms of processing, synthesized in the endoplasmic reticulum as an inactive form which is proteolytically cleaved by a furin-like convertase in the trans-Golgi network before it reaches the plasma membrane to yield an active, ligand-accessible form. Cleavage results in a C-terminal fragment N(TM) and a N-terminal fragment N(EC). Following ligand binding, it is cleaved by TNF-alpha converting enzyme (TACE) to yield a membrane-associated intermediate fragment called notch extracellular truncation (NEXT). This fragment is then cleaved by presenilin dependent gamma-secretase to release a notch-derived peptide containing the intracellular domain (NICD) from the membrane. Post-translationally, phosphorylated. As to expression, highly expressed in the heart, moderately in the lung and placenta and at low levels in the liver, skeletal muscle, kidney, pancreas, spleen, lymph node, thymus, bone marrow and fetal liver. No expression was seen in adult brain or peripheral blood leukocytes.

It is found in the cell membrane. Its subcellular location is the nucleus. Its function is as follows. Functions as a receptor for membrane-bound ligands Jagged1, Jagged2 and Delta1 to regulate cell-fate determination. Upon ligand activation through the released notch intracellular domain (NICD) it forms a transcriptional activator complex with RBPJ/RBPSUH and activates genes of the enhancer of split locus. Affects the implementation of differentiation, proliferation and apoptotic programs. May regulate branching morphogenesis in the developing vascular system. This Homo sapiens (Human) protein is Neurogenic locus notch homolog protein 4.